A 122-amino-acid chain; its full sequence is Putative 2'-deoxynucleoside 5'-phosphate N-hydrolase 1 (122 aa).

Residues 4 to 10 (FLSGSIR), Tyr19, His37, Glu83, and 105 to 107 (SAM) contribute to the substrate site.

Belongs to the 2'-deoxynucleoside 5'-phosphate N-hydrolase 1 family. As to quaternary structure, monomer and homodimer.

The catalysed reaction is a pyrimidine 2'-deoxyribonucleoside 5'-phosphate + H2O = a pyrimidine nucleobase + 2-deoxy-D-ribose 5-phosphate. The enzyme catalyses a purine 2'-deoxyribonucleoside 5'-phosphate + H2O = a purine nucleobase + 2-deoxy-D-ribose 5-phosphate. Functionally, catalyzes the cleavage of the N-glycosidic bond of deoxyribonucleoside 5'-monophosphates to yield deoxyribose 5-phosphate and a purine or pyrimidine base. This is Putative 2'-deoxynucleoside 5'-phosphate N-hydrolase 1 from Methanococcoides burtonii (strain DSM 6242 / NBRC 107633 / OCM 468 / ACE-M).